We begin with the raw amino-acid sequence, 130 residues long: Small ribosomal subunit protein uS11 (130 aa).

This sequence belongs to the universal ribosomal protein uS11 family. As to quaternary structure, part of the 30S ribosomal subunit. Interacts with proteins S7 and S18. Binds to IF-3.

Located on the platform of the 30S subunit, it bridges several disparate RNA helices of the 16S rRNA. Forms part of the Shine-Dalgarno cleft in the 70S ribosome. This chain is Small ribosomal subunit protein uS11, found in Thiobacillus denitrificans (strain ATCC 25259 / T1).